The following is an 81-amino-acid chain: ATP synthase subunit C, plastid (81 aa).

2 consecutive transmembrane segments (helical) span residues P3–G23 and E61–I81.

Belongs to the ATPase C chain family. As to quaternary structure, F-type ATPases have 2 components, F(1) - the catalytic core - and F(0) - the membrane proton channel. F(1) has five subunits: alpha(3), beta(3), gamma(1), delta(1), epsilon(1). F(0) has four main subunits: a(1), b(1), b'(1) and c(10-14). The alpha and beta chains form an alternating ring which encloses part of the gamma chain. F(1) is attached to F(0) by a central stalk formed by the gamma and epsilon chains, while a peripheral stalk is formed by the delta, b and b' chains.

It is found in the plastid membrane. In terms of biological role, f(1)F(0) ATP synthase produces ATP from ADP in the presence of a proton or sodium gradient. F-type ATPases consist of two structural domains, F(1) containing the extramembraneous catalytic core and F(0) containing the membrane proton channel, linked together by a central stalk and a peripheral stalk. During catalysis, ATP synthesis in the catalytic domain of F(1) is coupled via a rotary mechanism of the central stalk subunits to proton translocation. Functionally, key component of the F(0) channel; it plays a direct role in translocation across the membrane. A homomeric c-ring of between 10-14 subunits forms the central stalk rotor element with the F(1) delta and epsilon subunits. This chain is ATP synthase subunit C, plastid, found in Aneura mirabilis (Parasitic liverwort).